The following is a 245-amino-acid chain: Geranylgeranylglyceryl phosphate synthase (245 aa).

Residues Asp22 and Ser51 each contribute to the Mg(2+) site. Sn-glycerol 1-phosphate contacts are provided by residues 169 to 175 (YLEAGSG), 200 to 201 (GG), and 222 to 223 (GT).

It belongs to the GGGP/HepGP synthase family. Group II subfamily. Homopentamer. The cofactor is Mg(2+).

It is found in the cytoplasm. The enzyme catalyses sn-glycerol 1-phosphate + (2E,6E,10E)-geranylgeranyl diphosphate = sn-3-O-(geranylgeranyl)glycerol 1-phosphate + diphosphate. The protein operates within membrane lipid metabolism; glycerophospholipid metabolism. With respect to regulation, inhibited by EDTA in vitro. Functionally, prenyltransferase that catalyzes the transfer of the geranylgeranyl moiety of geranylgeranyl diphosphate (GGPP) to the C3 hydroxyl of sn-glycerol-1-phosphate (G1P). This reaction is the first ether-bond-formation step in the biosynthesis of archaeal membrane lipids. Cannot use sn-glycerol-3-phosphate (G3P) or dihydroxyacetonephosphate (DHAP) as substrate. The chain is Geranylgeranylglyceryl phosphate synthase from Methanothermobacter marburgensis (strain ATCC BAA-927 / DSM 2133 / JCM 14651 / NBRC 100331 / OCM 82 / Marburg) (Methanobacterium thermoautotrophicum).